Here is a 366-residue protein sequence, read N- to C-terminus: Quinolinate synthase (366 aa).

Iminosuccinate is bound by residues H44 and S61. A [4Fe-4S] cluster-binding site is contributed by C108. Residues 139–141 and S160 each bind iminosuccinate; that span reads YIN. C228 serves as a coordination point for [4Fe-4S] cluster. Residues 254–256 and T271 contribute to the iminosuccinate site; that span reads HPE. A [4Fe-4S] cluster-binding site is contributed by C318.

This sequence belongs to the quinolinate synthase family. Type 3 subfamily. It depends on [4Fe-4S] cluster as a cofactor.

The protein localises to the cytoplasm. The catalysed reaction is iminosuccinate + dihydroxyacetone phosphate = quinolinate + phosphate + 2 H2O + H(+). It functions in the pathway cofactor biosynthesis; NAD(+) biosynthesis; quinolinate from iminoaspartate: step 1/1. Catalyzes the condensation of iminoaspartate with dihydroxyacetone phosphate to form quinolinate. This is Quinolinate synthase from Listeria monocytogenes serotype 4b (strain F2365).